We begin with the raw amino-acid sequence, 241 residues long: NAD-dependent protein deacylase (241 aa).

The region spanning 1–237 (MNFPYRNIVV…PKLVDEILAL (237 aa)) is the Deacetylase sirtuin-type domain. 13–32 (GAGISAESGIQTFRAQDGLW) is a binding site for NAD(+). Residues Y57 and R60 each coordinate substrate. 94–97 (QNID) contacts NAD(+). H112 functions as the Proton acceptor in the catalytic mechanism. The Zn(2+) site is built by C120 and C139. Residues 179–181 (GTS), 205–207 (NLE), and A223 contribute to the NAD(+) site.

The protein belongs to the sirtuin family. Class III subfamily. As to quaternary structure, monomer. Requires Zn(2+) as cofactor.

It is found in the cytoplasm. It localises to the host cytoplasm. Its subcellular location is the host cytosol. The protein localises to the host nucleus. The catalysed reaction is N(6)-acetyl-L-lysyl-[protein] + NAD(+) + H2O = 2''-O-acetyl-ADP-D-ribose + nicotinamide + L-lysyl-[protein]. It catalyses the reaction N(6)-succinyl-L-lysyl-[protein] + NAD(+) + H2O = 2''-O-succinyl-ADP-D-ribose + nicotinamide + L-lysyl-[protein]. Functionally, NAD-dependent lysine deacetylase and desuccinylase that specifically removes acetyl and succinyl groups on target proteins. Modulates the activities of several proteins which are inactive in their acylated form. In the intracellular pathogen V.parahaemolyticus, this enzyme regulates host response during infection by induction of host histone deacetylation; it specifically causes deacetylation of histone lysine residues H3K56, H3K9, H3K18 and H4K16 which results in transcriptional repression of several host genes involved in epigenetic regulation, immune response, and autophagy. This chain is NAD-dependent protein deacylase, found in Vibrio parahaemolyticus serotype O3:K6 (strain RIMD 2210633).